We begin with the raw amino-acid sequence, 58 residues long: MAVPKRRTSKTRKNKRRTHFKISVPGMTECPNCGREYKLSHRVCKNCGSYNGEEVAAK.

This sequence belongs to the bacterial ribosomal protein bL32 family.

The polypeptide is Large ribosomal subunit protein bL32 (Staphylococcus aureus (strain NCTC 8325 / PS 47)).